The primary structure comprises 338 residues: Ketol-acid reductoisomerase (NADP(+)) (338 aa).

Positions 1–181 constitute a KARI N-terminal Rossmann domain; that stretch reads MKIYYDKDCN…GGGRAGIIET (181 aa). NADP(+) is bound by residues 24-27, Arg47, Ser50, Ser52, and 82-85; these read YGSQ and DETQ. Residue His107 is part of the active site. Gly133 is an NADP(+) binding site. The KARI C-terminal knotted domain maps to 182–327; sequence SFKEETETDL…ARLRSMMSWI (146 aa). 4 residues coordinate Mg(2+): Asp190, Glu194, Glu226, and Glu230. Substrate is bound at residue Ser251.

It belongs to the ketol-acid reductoisomerase family. Mg(2+) serves as cofactor.

It carries out the reaction (2R)-2,3-dihydroxy-3-methylbutanoate + NADP(+) = (2S)-2-acetolactate + NADPH + H(+). The catalysed reaction is (2R,3R)-2,3-dihydroxy-3-methylpentanoate + NADP(+) = (S)-2-ethyl-2-hydroxy-3-oxobutanoate + NADPH + H(+). It participates in amino-acid biosynthesis; L-isoleucine biosynthesis; L-isoleucine from 2-oxobutanoate: step 2/4. It functions in the pathway amino-acid biosynthesis; L-valine biosynthesis; L-valine from pyruvate: step 2/4. In terms of biological role, involved in the biosynthesis of branched-chain amino acids (BCAA). Catalyzes an alkyl-migration followed by a ketol-acid reduction of (S)-2-acetolactate (S2AL) to yield (R)-2,3-dihydroxy-isovalerate. In the isomerase reaction, S2AL is rearranged via a Mg-dependent methyl migration to produce 3-hydroxy-3-methyl-2-ketobutyrate (HMKB). In the reductase reaction, this 2-ketoacid undergoes a metal-dependent reduction by NADPH to yield (R)-2,3-dihydroxy-isovalerate. The polypeptide is Ketol-acid reductoisomerase (NADP(+)) (Geobacter metallireducens (strain ATCC 53774 / DSM 7210 / GS-15)).